The primary structure comprises 203 residues: Endo-type membrane-bound lytic murein transglycosylase A (203 aa).

The signal sequence occupies residues Met-1 to Gly-15. Cys-16 is lipidated: N-palmitoyl cysteine. Cys-16 is lipidated: S-diacylglycerol cysteine.

It belongs to the transglycosylase Slt family.

It is found in the cell outer membrane. It catalyses the reaction Endolytic cleavage of the (1-&gt;4)-beta-glycosidic linkage between N-acetylmuramic acid (MurNAc) and N-acetylglucosamine (GlcNAc) residues in peptidoglycan with concomitant formation of a 1,6-anhydrobond in the MurNAc residue.. Murein-degrading enzyme. May play a role in recycling of muropeptides during cell elongation and/or cell division. Preferentially cleaves at a distance of more than two disaccharide units from the ends of the glycan chain. This is Endo-type membrane-bound lytic murein transglycosylase A from Citrobacter koseri (strain ATCC BAA-895 / CDC 4225-83 / SGSC4696).